A 345-amino-acid polypeptide reads, in one-letter code: Ribosomal RNA large subunit methyltransferase F (345 aa).

Residues 1 to 14 (MTSKPMTRRPTANN) are compositionally biased toward polar residues. Disordered stretches follow at residues 1-35 (MTSKPMTRRPTANNHRNRSPETAKKLGQLHPRNPH) and 225-258 (EANSRKQHNLQRHRGKNENEQISRSSTKSGNAAQ). The segment covering 229 to 239 (RKQHNLQRHRG) has biased composition (basic residues). The segment covering 246–258 (ISRSSTKSGNAAQ) has biased composition (polar residues).

This sequence belongs to the methyltransferase superfamily. METTL16/RlmF family.

The protein localises to the cytoplasm. It catalyses the reaction adenosine(1618) in 23S rRNA + S-adenosyl-L-methionine = N(6)-methyladenosine(1618) in 23S rRNA + S-adenosyl-L-homocysteine + H(+). Specifically methylates the adenine in position 1618 of 23S rRNA. The chain is Ribosomal RNA large subunit methyltransferase F from Psychrobacter arcticus (strain DSM 17307 / VKM B-2377 / 273-4).